The chain runs to 604 residues: Aspartate--tRNA(Asp/Asn) ligase (604 aa).

An L-aspartate-binding site is contributed by Glu174. The aspartate stretch occupies residues 198–201 (QLYK). Arg220 provides a ligand contact to L-aspartate. ATP-binding positions include 220–222 (RDE) and Gln229. His460 provides a ligand contact to L-aspartate. ATP is bound at residue Glu494. Position 501 (Arg501) interacts with L-aspartate. Residue 546–549 (GLDR) coordinates ATP.

It belongs to the class-II aminoacyl-tRNA synthetase family. Type 1 subfamily. Homodimer.

The protein resides in the cytoplasm. It catalyses the reaction tRNA(Asx) + L-aspartate + ATP = L-aspartyl-tRNA(Asx) + AMP + diphosphate. Its function is as follows. Aspartyl-tRNA synthetase with relaxed tRNA specificity since it is able to aspartylate not only its cognate tRNA(Asp) but also tRNA(Asn). Reaction proceeds in two steps: L-aspartate is first activated by ATP to form Asp-AMP and then transferred to the acceptor end of tRNA(Asp/Asn). The sequence is that of Aspartate--tRNA(Asp/Asn) ligase from Paracidovorax citrulli (strain AAC00-1) (Acidovorax citrulli).